A 300-amino-acid chain; its full sequence is B1 kinase (300 aa).

Residues 16–282 form the Protein kinase domain; the sequence is WVVGPLIGKG…ITMVNSLTYF (267 aa). ATP contacts are provided by residues 22-30 and lysine 45; that span reads IGKGGFGSI. Residue asparagine 147 is the Proton acceptor of the active site.

The protein belongs to the protein kinase superfamily. Ser/Thr protein kinase family. Poxviruses subfamily. In terms of assembly, interacts with host JIP1; this interaction increases the amount of MAPK bound to JIP1 and subsequently increases the activity of transcription factors, such as JUN, that respond to these complexes. Interacts with protein OPG198; this interaction inhibits the repressive activity of OPG198 pseudokinase on viral replication factory formation. Requires Mg(2+) as cofactor. Post-translationally, autophosphorylated.

It is found in the virion. The protein resides in the host cytoplasm. It catalyses the reaction L-seryl-[protein] + ATP = O-phospho-L-seryl-[protein] + ADP + H(+). It carries out the reaction L-threonyl-[protein] + ATP = O-phospho-L-threonyl-[protein] + ADP + H(+). Essential serine/threonine-protein kinase that plays different role in the viral life cycle. Phosphorylates the host small ribosomal protein RACK1 thereby customizing the ribosomes to a state optimal for viral mRNAs (which contain poly-A leaders) but not for host mRNAs. Facilitates viral DNA replication by inhibiting host BANF1, a cellular host defense responsive to foreign DNA. Phosphorylates host BANF1 on serine and threonine residues; this leads to BANF1 relocalization to the cytoplasm, loss of dimerization and impaired DNA binding activity. Indeed, BANF1 activity depends on its DNA-binding property which is blocked by VPK1-mediated phosphorylation. Required for viral intermediate genes expression, probably by inhibiting host BANF1. Modulates cellular responses via host JUN by two different mechanisms, either by direct phosphorylation or by modulation of upstream JIP1-MAPK complexes. Seems to participate in the accumulation/processing of late proteins and thus in virion maturation. In addition, inhibits B12 repressive activity on viral DNA replication via a phosphorylation-dependent mechanism. The protein is B1 kinase (OPG187) of Homo sapiens (Human).